Here is a 491-residue protein sequence, read N- to C-terminus: Cholesterol 22-monohydroxylase CYP90B51 (491 aa).

A helical transmembrane segment spans residues 6 to 26; it reads ITFYCLSSILSVLLIFIFILI. Cys-437 contacts heme.

This sequence belongs to the cytochrome P450 family. Mainly expressed in leaves and seed pods and, to a lower extent, in flowers and stems.

Its subcellular location is the membrane. It carries out the reaction cholesterol + reduced [NADPH--hemoprotein reductase] + O2 = (22S)-22-hydroxycholesterol + oxidized [NADPH--hemoprotein reductase] + H2O + H(+). The protein operates within steroid metabolism; cholesterol metabolism. In terms of biological role, canonical brassinosteroid (BR)-biosynthetic enzyme capable of converting cholesterol to 22S-hydroxycholesterol via sterol-C22 hydroxylation. This chain is Cholesterol 22-monohydroxylase CYP90B51, found in Trigonella foenum-graecum (Fenugreek).